We begin with the raw amino-acid sequence, 288 residues long: Energy-coupling factor transporter ATP-binding protein EcfA2 (288 aa).

One can recognise an ABC transporter domain in the interval 3–246; it reads IKLEQLGYCY…PDALVDLGLS (244 aa). Residue 40–47 coordinates ATP; it reads GHTGSGKS.

This sequence belongs to the ABC transporter superfamily. Energy-coupling factor EcfA family. Forms a stable energy-coupling factor (ECF) transporter complex composed of 2 membrane-embedded substrate-binding proteins (S component), 2 ATP-binding proteins (A component) and 2 transmembrane proteins (T component).

Its subcellular location is the cell membrane. ATP-binding (A) component of a common energy-coupling factor (ECF) ABC-transporter complex. Unlike classic ABC transporters this ECF transporter provides the energy necessary to transport a number of different substrates. This Listeria welshimeri serovar 6b (strain ATCC 35897 / DSM 20650 / CCUG 15529 / CIP 8149 / NCTC 11857 / SLCC 5334 / V8) protein is Energy-coupling factor transporter ATP-binding protein EcfA2.